A 162-amino-acid chain; its full sequence is Beta-carotene hydroxylase (162 aa).

The region spanning 8–135 is the Fatty acid hydroxylase domain; sequence VATVLVMELT…GRDHCVSFGF (128 aa).

Belongs to the sterol desaturase family.

It catalyses the reaction all-trans-beta-carotene + 4 reduced [2Fe-2S]-[ferredoxin] + 2 O2 + 4 H(+) = all-trans-zeaxanthin + 4 oxidized [2Fe-2S]-[ferredoxin] + 2 H2O. The protein operates within carotenoid biosynthesis; astaxanthin biosynthesis. Catalyzes the hydroxylation reaction from beta-carotene to zeaxanthin via beta-cryptoxanthin. In Paracoccus sp. (strain PC1) (Alcaligenes sp. (strain PC1)), this protein is Beta-carotene hydroxylase (crtZ).